Consider the following 54-residue polypeptide: ATCAGQDKPCKETCDCCGERGECVCGLSYEGKYRCICRQGTFLIAWYKLASCKK.

Intrachain disulfides connect Cys-3/Cys-17, Cys-10/Cys-23, Cys-14/Cys-52, Cys-16/Cys-37, and Cys-25/Cys-35.

As to expression, expressed by the venom gland.

The protein localises to the secreted. Blocks voltage-gated sodium channels (Nav). Causes immediate spastic paralysis and death in mice within 1 minute of injection at dose levels of 1.5 ug per mouse. This is U7-ctenitoxin-Pk1a from Phoneutria keyserlingi (Brazilian wandering spider).